Consider the following 524-residue polypeptide: Cytochrome P450 6k1 (524 aa).

C464 contacts heme.

It belongs to the cytochrome P450 family. Heme serves as cofactor.

The protein resides in the endoplasmic reticulum membrane. It localises to the microsome membrane. The protein is Cytochrome P450 6k1 (CYP6K1) of Blattella germanica (German cockroach).